Consider the following 404-residue polypeptide: Probable ketol-acid reductoisomerase, mitochondrial (404 aa).

The 191-residue stretch at Thr-63–Thr-253 folds into the KARI N-terminal Rossmann domain. NADP(+)-binding positions include Gly-91 to Gly-100, Arg-115 to Ser-120, and Ser-153 to Gln-157. Residue His-178 is part of the active site. Positions Thr-254–His-401 constitute a KARI C-terminal knotted domain. The residue at position 261 (Ser-261) is a Phosphoserine. Mg(2+)-binding residues include Asp-262, Glu-266, Glu-298, and Glu-302. Ser-324 provides a ligand contact to substrate.

Belongs to the ketol-acid reductoisomerase family. The cofactor is Mg(2+).

Its subcellular location is the mitochondrion. The enzyme catalyses (2R)-2,3-dihydroxy-3-methylbutanoate + NADP(+) = (2S)-2-acetolactate + NADPH + H(+). The catalysed reaction is (2R,3R)-2,3-dihydroxy-3-methylpentanoate + NADP(+) = (S)-2-ethyl-2-hydroxy-3-oxobutanoate + NADPH + H(+). Its pathway is amino-acid biosynthesis; L-isoleucine biosynthesis; L-isoleucine from 2-oxobutanoate: step 2/4. It functions in the pathway amino-acid biosynthesis; L-valine biosynthesis; L-valine from pyruvate: step 2/4. In Schizosaccharomyces pombe (strain 972 / ATCC 24843) (Fission yeast), this protein is Probable ketol-acid reductoisomerase, mitochondrial (ilv5).